We begin with the raw amino-acid sequence, 232 residues long: Phosphatidylserine decarboxylase proenzyme (232 aa).

Residue S190 is the Schiff-base intermediate with substrate; via pyruvic acid of the active site. Pyruvic acid (Ser); by autocatalysis is present on S190.

Belongs to the phosphatidylserine decarboxylase family. PSD-A subfamily. As to quaternary structure, heterodimer of a large membrane-associated beta subunit and a small pyruvoyl-containing alpha subunit. Requires pyruvate as cofactor. Post-translationally, is synthesized initially as an inactive proenzyme. Formation of the active enzyme involves a self-maturation process in which the active site pyruvoyl group is generated from an internal serine residue via an autocatalytic post-translational modification. Two non-identical subunits are generated from the proenzyme in this reaction, and the pyruvate is formed at the N-terminus of the alpha chain, which is derived from the carboxyl end of the proenzyme. The post-translation cleavage follows an unusual pathway, termed non-hydrolytic serinolysis, in which the side chain hydroxyl group of the serine supplies its oxygen atom to form the C-terminus of the beta chain, while the remainder of the serine residue undergoes an oxidative deamination to produce ammonia and the pyruvoyl prosthetic group on the alpha chain.

It is found in the cell membrane. It catalyses the reaction a 1,2-diacyl-sn-glycero-3-phospho-L-serine + H(+) = a 1,2-diacyl-sn-glycero-3-phosphoethanolamine + CO2. Its pathway is phospholipid metabolism; phosphatidylethanolamine biosynthesis; phosphatidylethanolamine from CDP-diacylglycerol: step 2/2. Its function is as follows. Catalyzes the formation of phosphatidylethanolamine (PtdEtn) from phosphatidylserine (PtdSer). The chain is Phosphatidylserine decarboxylase proenzyme from Afipia carboxidovorans (strain ATCC 49405 / DSM 1227 / KCTC 32145 / OM5) (Oligotropha carboxidovorans).